We begin with the raw amino-acid sequence, 65 residues long: Large ribosomal subunit protein bL35 (65 aa).

This sequence belongs to the bacterial ribosomal protein bL35 family.

The sequence is that of Large ribosomal subunit protein bL35 from Buchnera aphidicola subsp. Cinara cedri (strain Cc).